The sequence spans 161 residues: Ribonuclease P protein component 2 (161 aa).

This sequence belongs to the eukaryotic/archaeal RNase P protein component 2 family. In terms of assembly, consists of a catalytic RNA component and at least 4-5 protein subunits.

The protein resides in the cytoplasm. The catalysed reaction is Endonucleolytic cleavage of RNA, removing 5'-extranucleotides from tRNA precursor.. In terms of biological role, part of ribonuclease P, a protein complex that generates mature tRNA molecules by cleaving their 5'-ends. The polypeptide is Ribonuclease P protein component 2 (Haloarcula marismortui (strain ATCC 43049 / DSM 3752 / JCM 8966 / VKM B-1809) (Halobacterium marismortui)).